The chain runs to 865 residues: Protein translocase subunit SecA (865 aa).

ATP contacts are provided by residues Gln-85, 103–107, and Asp-505; that span reads GEGKT. Residues Cys-847, Cys-849, Cys-858, and His-859 each coordinate Zn(2+).

It belongs to the SecA family. Monomer and homodimer. Part of the essential Sec protein translocation apparatus which comprises SecA, SecYEG and auxiliary proteins SecDF. Other proteins may also be involved. It depends on Zn(2+) as a cofactor.

Its subcellular location is the cell membrane. The protein localises to the cytoplasm. The enzyme catalyses ATP + H2O + cellular proteinSide 1 = ADP + phosphate + cellular proteinSide 2.. Functionally, part of the Sec protein translocase complex. Interacts with the SecYEG preprotein conducting channel. Has a central role in coupling the hydrolysis of ATP to the transfer of proteins into and across the cell membrane, serving as an ATP-driven molecular motor driving the stepwise translocation of polypeptide chains across the membrane. The polypeptide is Protein translocase subunit SecA (Lactococcus lactis subsp. lactis (strain IL1403) (Streptococcus lactis)).